The following is a 445-amino-acid chain: MTDSNQPTPLQARKSGALHGTARVPGDKSISHRALILGALAVGETRISGLLEGEDVINTAKAMRALGAKVERTGDCEWRVHGVGVAGFATPEAPLDFGNSGTGCRLAMGAVAGSPIVATFDGDASLRSRPMRRIVDPLELMGAKVVSSSEGGRLPLALQGARDPLPILYRTPVPSAQIKSAVLLAGLSAPGVTTVIEAEASRDHTELMLQHFGATIVTEAEGAHGRKISLTGQPELRGAPVVVPADPSSAAFPMVAALVVPGSDIELTDVMTNPLRTGLITTLREMGALIEDSDVRGDAGEPMARFRVRGSKLKGVEVPPERAPSMIDEYLVLAVAAAFAEGTTVMRGLHELRVKESDRLEATAAMLRVNGVAVEIAGDDLIVEGKGHVPGGGVVATHMDHRIAMSALAMGLASDKPVTVDDTAFIATSFPDFVPMMQRLGAEFG.

A disordered region spans residues 1 to 25 (MTDSNQPTPLQARKSGALHGTARVP). Residues Lys-28, Ser-29, and Arg-33 each contribute to the 3-phosphoshikimate site. Lys-28 is a phosphoenolpyruvate binding site. The phosphoenolpyruvate site is built by Gly-101 and Arg-129. 3-phosphoshikimate contacts are provided by Ser-175, Gln-177, Asp-328, and Lys-355. Position 177 (Gln-177) interacts with phosphoenolpyruvate. Asp-328 serves as the catalytic Proton acceptor. The phosphoenolpyruvate site is built by Arg-359 and Arg-402.

The protein belongs to the EPSP synthase family. Monomer.

The protein resides in the cytoplasm. It carries out the reaction 3-phosphoshikimate + phosphoenolpyruvate = 5-O-(1-carboxyvinyl)-3-phosphoshikimate + phosphate. It participates in metabolic intermediate biosynthesis; chorismate biosynthesis; chorismate from D-erythrose 4-phosphate and phosphoenolpyruvate: step 6/7. Its function is as follows. Catalyzes the transfer of the enolpyruvyl moiety of phosphoenolpyruvate (PEP) to the 5-hydroxyl of shikimate-3-phosphate (S3P) to produce enolpyruvyl shikimate-3-phosphate and inorganic phosphate. The sequence is that of 3-phosphoshikimate 1-carboxyvinyltransferase from Rhodopseudomonas palustris (strain TIE-1).